Consider the following 134-residue polypeptide: Inner membrane protein YqjE (134 aa).

Over 1 to 55 (MADTHHAQGPGKSVLGIGQRIVSIMVEMVETRLRLAVVELEEEKANLFQLLLMLG) the chain is Cytoplasmic. The helical transmembrane segment at 56–76 (LTMLFAAFGLMSLMVLIIWAV) threads the bilayer. Residues 77–83 (DPQYRLN) lie on the Periplasmic side of the membrane. A helical transmembrane segment spans residues 84-104 (AMIATTVVLLLLALIGGIWTL). Residues 105–134 (RKSRKSTLLRHTRHELANDRQLLEEESREQ) are Cytoplasmic-facing.

Its subcellular location is the cell inner membrane. The polypeptide is Inner membrane protein YqjE (yqjE) (Escherichia coli O157:H7).